The following is a 349-amino-acid chain: Inositol 2-dehydrogenase (349 aa).

The protein belongs to the Gfo/Idh/MocA family. In terms of assembly, homotetramer.

The catalysed reaction is myo-inositol + NAD(+) = scyllo-inosose + NADH + H(+). Functionally, involved in the oxidation of myo-inositol (MI) to 2-keto-myo-inositol (2KMI or 2-inosose). The sequence is that of Inositol 2-dehydrogenase from Mycolicibacterium gilvum (strain PYR-GCK) (Mycobacterium gilvum (strain PYR-GCK)).